The chain runs to 385 residues: Serpin-Z10 (385 aa).

The RCL stretch occupies residues 333-357 (GTEAAAVSVGVVSCTSFRRNPDFVA).

Belongs to the serpin family.

Its function is as follows. Probable serine protease inhibitor. This is Serpin-Z10 from Arabidopsis thaliana (Mouse-ear cress).